We begin with the raw amino-acid sequence, 420 residues long: Gamma-glutamyl phosphate reductase (420 aa).

The protein belongs to the gamma-glutamyl phosphate reductase family.

The protein resides in the cytoplasm. The catalysed reaction is L-glutamate 5-semialdehyde + phosphate + NADP(+) = L-glutamyl 5-phosphate + NADPH + H(+). Its pathway is amino-acid biosynthesis; L-proline biosynthesis; L-glutamate 5-semialdehyde from L-glutamate: step 2/2. In terms of biological role, catalyzes the NADPH-dependent reduction of L-glutamate 5-phosphate into L-glutamate 5-semialdehyde and phosphate. The product spontaneously undergoes cyclization to form 1-pyrroline-5-carboxylate. The chain is Gamma-glutamyl phosphate reductase from Neisseria gonorrhoeae (strain ATCC 700825 / FA 1090).